A 262-amino-acid polypeptide reads, in one-letter code: Small ribosomal subunit protein eS4 (262 aa).

In terms of domain architecture, S4 RNA-binding spans 42-105 (LPLXVFLRNR…NEHFRLAYDV (64 aa)).

Belongs to the eukaryotic ribosomal protein eS4 family.

The protein is Small ribosomal subunit protein eS4 (RPS4) of Candida albicans (Yeast).